We begin with the raw amino-acid sequence, 379 residues long: Neutral protease 2 homolog TRV_03208 (379 aa).

Positions 1–19 (MKFFTALAAVGALLAPALA) are cleaved as a signal peptide. The propeptide occupies 20 to 187 (LPTPASEEAS…DYFSKSLDKR (168 aa)). 2 disulfide bridges follow: cysteine 193-cysteine 263 and cysteine 270-cysteine 288. Asparagine 221 is a glycosylation site (N-linked (GlcNAc...) asparagine). Zn(2+) is bound at residue histidine 312. The active site involves glutamate 313. Residues histidine 316 and aspartate 327 each contribute to the Zn(2+) site.

It belongs to the peptidase M35 family. It depends on Zn(2+) as a cofactor.

It localises to the secreted. The enzyme catalyses Preferential cleavage of bonds with hydrophobic residues in P1'. Also 3-Asn-|-Gln-4 and 8-Gly-|-Ser-9 bonds in insulin B chain.. Its function is as follows. Secreted metalloproteinase that allows assimilation of proteinaceous substrates. Shows high activities on basic nuclear substrates such as histone and protamine. May be involved in virulence. The chain is Neutral protease 2 homolog TRV_03208 from Trichophyton verrucosum (strain HKI 0517).